The sequence spans 201 residues: MGNHLTEMAPTASSFLPHFQALHVVVIGLDSAGKTSLLYRLKFKEFVQSVPTKGFNTEKIRVPLGGSRGITFQVWDVGGQEKLRPLWRSYTRRTDGLVFVVDSAETERLEEARMELHRISKASDNQGVPVLVLANKQDQPGALSAAEVEKRLAVRELAAATLTHVQGCSAVDGLGLQPGLEHLYEMILKRKKAPRSSKKRR.

G2 is lipidated: N-myristoyl glycine. GTP-binding positions include 28 to 35, 76 to 80, and 135 to 138; these read GLDSAGKT, DVGGQ, and NKQD.

It belongs to the small GTPase superfamily. Arf family. Interacts with CYTH2; the interaction is direct and ARL4D GTP-dependent. Does not interact with ARL4D.

The protein resides in the nucleus. The protein localises to the nucleolus. It localises to the cell membrane. Its subcellular location is the cytoplasm. Functionally, small GTP-binding protein which cycles between an inactive GDP-bound and an active GTP-bound form, and the rate of cycling is regulated by guanine nucleotide exchange factors (GEF) and GTPase-activating proteins (GAP). GTP-binding protein that does not act as an allosteric activator of the cholera toxin catalytic subunit. Recruits CYTH1, CYTH2, CYTH3 and CYTH4 to the plasma membrane in GDP-bound form. This Mus musculus (Mouse) protein is ADP-ribosylation factor-like protein 4D (Arl4d).